We begin with the raw amino-acid sequence, 440 residues long: MKMTGWKKKLCRGHHLWALGCYSLLAVVALRLSLRLKCDVDSLDLESRDFQSQRCRDVLYKNLKLPAKRSINCSGITRGDQEAVVQALLDNLEVKKKRLPFTDTYYLNITRDCEQFKAQRKFIQFPLSKEELDFPIAYSMVVHEKIENFERLLRAVYAPQNIYCVHVDVKSPETFKEAVKAIISCFPNVFMASKLVPVVYASWSRVQADLNCMEDLLQSSVPWKYLLNTCGTDFPIKTNAEMVLALKMLNGKNSMESEIPSEYKKNRWKYRYEVTDRLYLTSKMKDPPPDNLPMFTGNAYFVASRAFVQHVLENPKSQRLIEWVKDTYSPDEHLWATLQRAPWMPGSVPYHPKYHISDMTAIARLVKWQGHEGDVSMGAPYAPCSGIHQRAICIYGAGDLHWILQNHHLLANKFDPRVDDNVLQCLEEYLRHKAIYGTEL.

The Cytoplasmic portion of the chain corresponds to 1–12 (MKMTGWKKKLCR). The chain crosses the membrane as a helical; Signal-anchor for type II membrane protein span at residues 13–30 (GHHLWALGCYSLLAVVAL). Residues 31–440 (RLSLRLKCDV…RHKAIYGTEL (410 aa)) are Lumenal-facing. 4 cysteine pairs are disulfide-bonded: C73–C230, C164–C384, C185–C212, and C393–C425. A glycan (N-linked (GlcNAc...) asparagine) is linked at N108.

Belongs to the glycosyltransferase 14 family. Post-translationally, N-glycosylated.

Its subcellular location is the golgi apparatus membrane. It carries out the reaction a 3-O-[beta-D-galactosyl-(1-&gt;3)-N-acetyl-alpha-D-galactosaminyl]-L-seryl-[protein] + UDP-N-acetyl-alpha-D-glucosamine = 3-O-{beta-D-galactosyl-(1-&gt;3)-[N-acetyl-beta-D-glucosaminyl-(1-&gt;6)]-N-acetyl-alpha-D-galactosaminyl}-L-seryl-[protein] + UDP + H(+). The enzyme catalyses a 3-O-[beta-D-galactosyl-(1-&gt;3)-N-acetyl-alpha-D-galactosaminyl]-L-threonyl-[protein] + UDP-N-acetyl-alpha-D-glucosamine = a 3-O-{beta-D-galactosyl-(1-&gt;3)-[N-acetyl-beta-D-glucosaminyl-(1-&gt;6)]-N-acetyl-alpha-D-galactosaminyl}-L-threonyl-[protein] + UDP + H(+). It catalyses the reaction a beta-D-Gal-(1-&gt;4)-beta-D-GlcNAc-(1-&gt;3)-beta-D-Gal-(1-&gt;4)-beta-D-GlcNAc derivative + UDP-N-acetyl-alpha-D-glucosamine = a beta-D-Gal-(1-&gt;4)-beta-D-GlcNAc-(1-&gt;3)-[beta-D-GlcNAc-(1-&gt;6)]-beta-D-Gal-(1-&gt;4)-N-acetyl-beta-D-glucosaminyl derivative + UDP + H(+). The catalysed reaction is 3-O-[N-acetyl-beta-D-glucosaminyl-(1-&gt;3)-N-acetyl-alpha-D-galactosaminyl]-L-seryl-[protein] + UDP-N-acetyl-alpha-D-glucosamine = 3-O-[N-acetyl-beta-D-glucosaminyl-(1-&gt;3)-[N-acetyl-beta-D-glucosaminyl-(1-&gt;6)]-N-acetyl-alpha-D-galactosaminyl]-L-seryl-[protein] + UDP + H(+). It carries out the reaction a 3-O-[N-acetyl-beta-D-glucosaminyl-(1-&gt;3)-N-acetyl-alpha-D-galactosaminyl]-L-threonyl-[protein] + UDP-N-acetyl-alpha-D-glucosamine = 3-O-[N-acetyl-beta-D-glucosaminyl-(1-&gt;3)-[N-acetyl-beta-D-glucosaminyl-(1-&gt;6)]-N-acetyl-alpha-D-galactosaminyl]-L-threonyl-[protein] + UDP + H(+). It participates in protein modification; protein glycosylation. In terms of biological role, glycosyltransferase that can synthesize all known mucin beta 6 N-acetylglucosaminides. Mediates core 2 and core 4 O-glycan branching, 2 important steps in mucin-type biosynthesis. Also has I-branching enzyme activity by converting linear into branched poly-N-acetyllactosaminoglycans, leading to introduce the blood group I antigen during embryonic development. This is Beta-1,3-galactosyl-O-glycosyl-glycoprotein beta-1,6-N-acetylglucosaminyltransferase 3 (GCNT3) from Bos mutus grunniens (Wild yak).